The primary structure comprises 94 residues: Integration host factor subunit beta (94 aa).

This sequence belongs to the bacterial histone-like protein family. Heterodimer of an alpha and a beta chain.

This protein is one of the two subunits of integration host factor, a specific DNA-binding protein that functions in genetic recombination as well as in transcriptional and translational control. The chain is Integration host factor subunit beta (ihfB) from Pasteurella multocida (strain Pm70).